A 353-amino-acid chain; its full sequence is Photosystem II protein D1 (353 aa).

Thr2 carries the post-translational modification N-acetylthreonine. Thr2 is modified (phosphothreonine). The next 3 helical transmembrane spans lie at Tyr29–Ser46, His118–Leu133, and Trp142–Ala156. Residue His118 coordinates chlorophyll a. Tyr126 contacts pheophytin a. Residues Asp170 and Glu189 each coordinate [CaMn4O5] cluster. Residues Phe197–Leu218 form a helical membrane-spanning segment. Residue His198 participates in chlorophyll a binding. Residues His215 and Ser264 to Phe265 contribute to the a quinone site. His215 contributes to the Fe cation binding site. Residue His272 participates in Fe cation binding. The helical transmembrane segment at Phe274 to Leu288 threads the bilayer. [CaMn4O5] cluster-binding residues include His332, Glu333, Asp342, and Ala344. Positions Ala345–Gly353 are excised as a propeptide.

It belongs to the reaction center PufL/M/PsbA/D family. As to quaternary structure, PSII is composed of 1 copy each of membrane proteins PsbA, PsbB, PsbC, PsbD, PsbE, PsbF, PsbH, PsbI, PsbJ, PsbK, PsbL, PsbM, PsbT, PsbX, PsbY, PsbZ, Psb30/Ycf12, at least 3 peripheral proteins of the oxygen-evolving complex and a large number of cofactors. It forms dimeric complexes. It depends on The D1/D2 heterodimer binds P680, chlorophylls that are the primary electron donor of PSII, and subsequent electron acceptors. It shares a non-heme iron and each subunit binds pheophytin, quinone, additional chlorophylls, carotenoids and lipids. D1 provides most of the ligands for the Mn4-Ca-O5 cluster of the oxygen-evolving complex (OEC). There is also a Cl(-1) ion associated with D1 and D2, which is required for oxygen evolution. The PSII complex binds additional chlorophylls, carotenoids and specific lipids. as a cofactor. In terms of processing, tyr-161 forms a radical intermediate that is referred to as redox-active TyrZ, YZ or Y-Z. C-terminally processed by CTPA; processing is essential to allow assembly of the oxygen-evolving complex and thus photosynthetic growth.

The protein resides in the plastid. Its subcellular location is the chloroplast thylakoid membrane. It carries out the reaction 2 a plastoquinone + 4 hnu + 2 H2O = 2 a plastoquinol + O2. In terms of biological role, photosystem II (PSII) is a light-driven water:plastoquinone oxidoreductase that uses light energy to abstract electrons from H(2)O, generating O(2) and a proton gradient subsequently used for ATP formation. It consists of a core antenna complex that captures photons, and an electron transfer chain that converts photonic excitation into a charge separation. The D1/D2 (PsbA/PsbD) reaction center heterodimer binds P680, the primary electron donor of PSII as well as several subsequent electron acceptors. In Hordeum vulgare (Barley), this protein is Photosystem II protein D1.